The primary structure comprises 161 residues: MAVTLHTDVGDIKIELFCERTPKTCENFLALCASNYYNGCVFHRNIKGFMVQTGDPLGTGKGGTSIWGKKFEDEFSEYLKHSVRGVVSMANNGPNTNGSQFFITYGKQPHLDMKYTVFGKVIDGLETLDELEKLPVNEKTYRPLNDVHIKDITIHANPFAL.

The PPIase cyclophilin-type domain occupies 1–154 (MAVTLHTDVG…NDVHIKDITI (154 aa)).

It belongs to the cyclophilin-type PPIase family. PPIL3 subfamily.

It carries out the reaction [protein]-peptidylproline (omega=180) = [protein]-peptidylproline (omega=0). PPIases accelerate the folding of proteins. It catalyzes the cis-trans isomerization of proline imidic peptide bonds in oligopeptides. This is Peptidyl-prolyl cis-trans isomerase-like 3 (PPIL3) from Gallus gallus (Chicken).